We begin with the raw amino-acid sequence, 463 residues long: L-seryl-tRNA(Sec) selenium transferase (463 aa).

Residue Lys-295 is modified to N6-(pyridoxal phosphate)lysine.

Belongs to the SelA family. In terms of assembly, homodecamer; pentamer of dimers. Binds only one seryl-tRNA(Sec) per dimer. Pyridoxal 5'-phosphate is required as a cofactor.

The protein resides in the cytoplasm. The enzyme catalyses L-seryl-tRNA(Sec) + selenophosphate + H(+) = L-selenocysteinyl-tRNA(Sec) + phosphate. It participates in aminoacyl-tRNA biosynthesis; selenocysteinyl-tRNA(Sec) biosynthesis; selenocysteinyl-tRNA(Sec) from L-seryl-tRNA(Sec) (bacterial route): step 1/1. In terms of biological role, converts seryl-tRNA(Sec) to selenocysteinyl-tRNA(Sec) required for selenoprotein biosynthesis. This is L-seryl-tRNA(Sec) selenium transferase from Escherichia coli O127:H6 (strain E2348/69 / EPEC).